The primary structure comprises 158 residues: NAD(P)H-quinone oxidoreductase subunit J, chloroplastic (158 aa).

It belongs to the complex I 30 kDa subunit family. As to quaternary structure, NDH is composed of at least 16 different subunits, 5 of which are encoded in the nucleus.

The protein resides in the plastid. It localises to the chloroplast thylakoid membrane. It carries out the reaction a plastoquinone + NADH + (n+1) H(+)(in) = a plastoquinol + NAD(+) + n H(+)(out). The catalysed reaction is a plastoquinone + NADPH + (n+1) H(+)(in) = a plastoquinol + NADP(+) + n H(+)(out). Its function is as follows. NDH shuttles electrons from NAD(P)H:plastoquinone, via FMN and iron-sulfur (Fe-S) centers, to quinones in the photosynthetic chain and possibly in a chloroplast respiratory chain. The immediate electron acceptor for the enzyme in this species is believed to be plastoquinone. Couples the redox reaction to proton translocation, and thus conserves the redox energy in a proton gradient. The protein is NAD(P)H-quinone oxidoreductase subunit J, chloroplastic of Morus indica (Mulberry).